Here is a 23-residue protein sequence, read N- to C-terminus: Phallacidin proprotein (23 aa).

Residue P1 is a propeptide. The segment at residues 2-8 (AWLVDCP) is a cross-link (cyclopeptide (Ala-Pro)). A cross-link (2'-cysteinyl-6'-hydroxytryptophan sulfoxide (Trp-Cys)) is located at residues 3 to 7 (WLVDC). The propeptide occupies 9 to 23 (CVGDDVNFILTRGQK).

It belongs to the MSDIN fungal toxin family. In terms of processing, processed by the macrocyclase-peptidase enzyme POPB to yield a toxic cyclic heptapeptide. POPB first removes 10 residues from the N-terminus. Conformational trapping of the remaining peptide forces the enzyme to release this intermediate rather than proceed to macrocyclization. The enzyme rebinds the remaining peptide in a different conformation and catalyzes macrocyclization of the N-terminal 7 residues.

In terms of biological role, major toxin that belongs to the bicyclic heptapeptides called phallotoxins. Although structurally related to amatoxins, phallotoxins have a different mode of action, which is the stabilization of F-actin. Phallotoxins are poisonous when administered parenterally, but not orally because of poor absorption. The chain is Phallacidin proprotein from Amanita fuligineoides.